The following is a 66-amino-acid chain: Large ribosomal subunit protein bL33c (66 aa).

Belongs to the bacterial ribosomal protein bL33 family.

The protein localises to the plastid. It localises to the chloroplast. This Eucalyptus globulus subsp. globulus (Tasmanian blue gum) protein is Large ribosomal subunit protein bL33c.